Consider the following 630-residue polypeptide: Probable potassium transport system protein Kup (630 aa).

12 helical membrane passes run 17–37, 51–71, 105–125, 144–164, 175–195, 218–238, 255–275, 283–303, 344–364, 374–394, 402–422, and 428–448; these read LAIA…LYSL, PSAI…VVGI, ITGL…GDAV, PQLS…LFWI, LFGP…VYHI, VLLA…AEAL, YVLV…LLLL, PFFL…STVA, IYVP…VIGF, YGIA…VVMV, LLVA…FGAN, and QGGW…MTWY.

The protein belongs to the HAK/KUP transporter (TC 2.A.72) family.

It localises to the cell inner membrane. The catalysed reaction is K(+)(in) + H(+)(in) = K(+)(out) + H(+)(out). In terms of biological role, transport of potassium into the cell. Likely operates as a K(+):H(+) symporter. The sequence is that of Probable potassium transport system protein Kup from Burkholderia thailandensis (strain ATCC 700388 / DSM 13276 / CCUG 48851 / CIP 106301 / E264).